Here is a 166-residue protein sequence, read N- to C-terminus: Phospholipase A2 myotoxin inhibitor protein (166 aa).

An N-terminal signal peptide occupies residues 1–19 (MRLILLSGLLLLGTFLANG). The 116-residue stretch at 46 to 161 (LKYAFLTVHK…CDDNLLVVCE (116 aa)) folds into the C-type lectin domain. 2 cysteine pairs are disulfide-bonded: Cys-83/Cys-160 and Cys-138/Cys-152. Residue Asn-122 is glycosylated (N-linked (GlcNAc...) asparagine).

Belongs to the alpha-type phospholipase A2 inhibitor family. Oligomer. Homotrimer; non-covalently linked. Glycosylated. The glycosylation has no role in the association of this PLI and PA2 enzyme. Expressed by the liver.

It is found in the secreted. Its function is as follows. This phospholipase A2 inhibitor binds directly phospholipase A2 in the presence or absence of calcium. Has anti-enzymatic, anti-myotoxic, anti-edema inducing, anti-cytotoxic, anti-bactericidal, and anti-lethal properties against basic and acidic phospholipases A2 from Bothrops venoms. The protein is Phospholipase A2 myotoxin inhibitor protein of Bothrops moojeni (Lance-headed viper).